A 173-amino-acid chain; its full sequence is NADH-ubiquinone oxidoreductase chain 6 (173 aa).

5 helical membrane-spanning segments follow: residues 1-21 (MTYF…AVAS), 27-47 (YGVV…LSLG), 48-68 (ASFV…VVFV), 87-107 (VIGY…ISGF), and 139-159 (WGVG…FVVL).

Belongs to the complex I subunit 6 family.

It localises to the mitochondrion membrane. The catalysed reaction is a ubiquinone + NADH + 5 H(+)(in) = a ubiquinol + NAD(+) + 4 H(+)(out). In terms of biological role, core subunit of the mitochondrial membrane respiratory chain NADH dehydrogenase (Complex I) that is believed to belong to the minimal assembly required for catalysis. Complex I functions in the transfer of electrons from NADH to the respiratory chain. The immediate electron acceptor for the enzyme is believed to be ubiquinone. This is NADH-ubiquinone oxidoreductase chain 6 (MT-ND6) from Brachyramphus marmoratus (Marbled murrelet).